The following is a 303-amino-acid chain: Acetyl-coenzyme A carboxylase carboxyl transferase subunit beta (303 aa).

The CoA carboxyltransferase N-terminal domain maps to 25–294 (LWIKCPETGE…NDVSAKSLNG (270 aa)).

This sequence belongs to the AccD/PCCB family. Acetyl-CoA carboxylase is a heterohexamer composed of biotin carboxyl carrier protein (AccB), biotin carboxylase (AccC) and two subunits each of ACCase subunit alpha (AccA) and ACCase subunit beta (AccD).

It is found in the cytoplasm. The catalysed reaction is N(6)-carboxybiotinyl-L-lysyl-[protein] + acetyl-CoA = N(6)-biotinyl-L-lysyl-[protein] + malonyl-CoA. Its pathway is lipid metabolism; malonyl-CoA biosynthesis; malonyl-CoA from acetyl-CoA: step 1/1. Functionally, component of the acetyl coenzyme A carboxylase (ACC) complex. Biotin carboxylase (BC) catalyzes the carboxylation of biotin on its carrier protein (BCCP) and then the CO(2) group is transferred by the transcarboxylase to acetyl-CoA to form malonyl-CoA. In Rhizobium rhizogenes (strain K84 / ATCC BAA-868) (Agrobacterium radiobacter), this protein is Acetyl-coenzyme A carboxylase carboxyl transferase subunit beta.